The primary structure comprises 420 residues: UDP-N-acetylglucosamine 1-carboxyvinyltransferase (420 aa).

22–23 (KN) serves as a coordination point for phosphoenolpyruvate. Arginine 93 is a binding site for UDP-N-acetyl-alpha-D-glucosamine. Residue cysteine 117 is the Proton donor of the active site. At cysteine 117 the chain carries 2-(S-cysteinyl)pyruvic acid O-phosphothioketal. Residues aspartate 306 and isoleucine 328 each coordinate UDP-N-acetyl-alpha-D-glucosamine.

It belongs to the EPSP synthase family. MurA subfamily.

The protein localises to the cytoplasm. It catalyses the reaction phosphoenolpyruvate + UDP-N-acetyl-alpha-D-glucosamine = UDP-N-acetyl-3-O-(1-carboxyvinyl)-alpha-D-glucosamine + phosphate. It participates in cell wall biogenesis; peptidoglycan biosynthesis. Functionally, cell wall formation. Adds enolpyruvyl to UDP-N-acetylglucosamine. The sequence is that of UDP-N-acetylglucosamine 1-carboxyvinyltransferase from Colwellia psychrerythraea (strain 34H / ATCC BAA-681) (Vibrio psychroerythus).